We begin with the raw amino-acid sequence, 281 residues long: Pantothenate synthetase (281 aa).

Residue methionine 26 to histidine 33 participates in ATP binding. Histidine 33 acts as the Proton donor in catalysis. Glutamine 57 is a (R)-pantoate binding site. Residue glutamine 57 participates in beta-alanine binding. An ATP-binding site is contributed by glycine 145–aspartate 148. Glutamine 151 is a (R)-pantoate binding site. Methionine 182–arginine 185 provides a ligand contact to ATP.

It belongs to the pantothenate synthetase family. In terms of assembly, homodimer.

The protein localises to the cytoplasm. It catalyses the reaction (R)-pantoate + beta-alanine + ATP = (R)-pantothenate + AMP + diphosphate + H(+). It participates in cofactor biosynthesis; (R)-pantothenate biosynthesis; (R)-pantothenate from (R)-pantoate and beta-alanine: step 1/1. In terms of biological role, catalyzes the condensation of pantoate with beta-alanine in an ATP-dependent reaction via a pantoyl-adenylate intermediate. In Idiomarina loihiensis (strain ATCC BAA-735 / DSM 15497 / L2-TR), this protein is Pantothenate synthetase.